We begin with the raw amino-acid sequence, 243 residues long: Transcription factor TFIIS homolog (243 aa).

In terms of domain architecture, TFIIS central spans 77-201 (MRDIIQMMFF…SQQKVAEKTS (125 aa)). The TFIIS-type zinc-finger motif lies at 202–242 (QLYKCPNCKQRMCTYREVQTRALDEPSTIFCTCKKCGHEFI). Cys-206, Cys-209, Cys-234, and Cys-237 together coordinate Zn(2+).

Belongs to the TFS-II family.

In terms of biological role, putative initiation factor. Necessary for efficient transcription elongation past template-encoded arresting sites. The chain is Transcription factor TFIIS homolog from Ornithodoros (relapsing fever ticks).